Consider the following 479-residue polypeptide: Protein TRIGALACTOSYLDIACYLGLYCEROL 4, chloroplastic (479 aa).

A transmembrane span lies at residues 288–310 (VFLSSPHVAVSGIIGSVMTAAFG).

As to quaternary structure, homodimer. Forms dimeric beta-barrel. Interacts with TGD5.

The protein resides in the plastid. The protein localises to the chloroplast outer membrane. Its subcellular location is the endoplasmic reticulum. Its function is as follows. Involved in lipid transfer from the endoplasmic reticulum (ER) to plastids. Specifically binds phosphatidic acid (PtdOH). In Arabidopsis thaliana (Mouse-ear cress), this protein is Protein TRIGALACTOSYLDIACYLGLYCEROL 4, chloroplastic.